Consider the following 172-residue polypeptide: Male-specific submandibular salivary gland protein (172 aa).

Positions 1–15 (MVKFLLLALALGVSC) are cleaved as a signal peptide. Asn-41 carries an N-linked (GlcNAc...) asparagine glycan. Intrachain disulfides connect Cys-60–Cys-64 and Cys-79–Cys-170.

This sequence belongs to the calycin superfamily. Lipocalin family. In terms of processing, N-glycosylated. In terms of tissue distribution, expressed in acinar cells of the submandibular salivary gland from where it is secreted into saliva (at protein level). Also released from the submandibular salivary gland into blood and excreted in urine (at protein level). Expressed in the lacrimal gland from where it is secreted into tears (at protein level).

The protein resides in the secreted. Its subcellular location is the cytoplasm. This chain is Male-specific submandibular salivary gland protein, found in Mesocricetus auratus (Golden hamster).